The following is a 177-amino-acid chain: Protein C2-DOMAIN ABA-RELATED 4 (177 aa).

Residues 4–118 enclose the C2 domain; that stretch reads ACPARTSSLM…LRMQLDGLPS (115 aa). Ca(2+) contacts are provided by Arg33, Asp34, Asp39, Asp85, His86, Asp87, and Asp93.

The protein belongs to the plant CAR protein family. As to quaternary structure, dimers and oligomers. Binds to PYR/PYL/RCAR abscisic acid intracellular receptors in an ABA-independent manner, both at the plasma membrane and in the nucleus. Interacts directly with PYR1, PYL1, PYL4, PYL6 and PYL8. Binds phospholipids in a Ca(2+)-dependent manner. Interacts with YchF1. Requires Ca(2+) as cofactor.

It localises to the cell membrane. Its subcellular location is the nucleus. It is found in the cytoplasm. The protein resides in the cytosol. Mediates the transient calcium-dependent interaction of PYR/PYL/RCAR abscisic acid (ABA) receptors with the plasma membrane and thus regulates ABA sensitivity. Stimulates the GTPase/ATPase activities of YchF1, and regulates its subcellular localization. Promotes tolerance towards salinity stress by limiting the accumulation of reactive oxygen species (ROS). Promotes resistance to bacterial pathogens (e.g. Xanthomonas oryzae pv. oryzae and P.syringae pv. tomato DC3000). Binds liposomes in the absence of exogenous Ca(2+), but this activity is enhanced in the presence of Ca(2+) and generates membrane curvature. The protein is Protein C2-DOMAIN ABA-RELATED 4 of Arabidopsis thaliana (Mouse-ear cress).